We begin with the raw amino-acid sequence, 290 residues long: 4-diphosphocytidyl-2-C-methyl-D-erythritol kinase (290 aa).

The active site involves K14. 103–113 (PMGGGLGGGSS) provides a ligand contact to ATP. Residue D145 is part of the active site.

The protein belongs to the GHMP kinase family. IspE subfamily. Homodimer.

The enzyme catalyses 4-CDP-2-C-methyl-D-erythritol + ATP = 4-CDP-2-C-methyl-D-erythritol 2-phosphate + ADP + H(+). Its pathway is isoprenoid biosynthesis; isopentenyl diphosphate biosynthesis via DXP pathway; isopentenyl diphosphate from 1-deoxy-D-xylulose 5-phosphate: step 3/6. Functionally, catalyzes the phosphorylation of the position 2 hydroxy group of 4-diphosphocytidyl-2C-methyl-D-erythritol. This Pectobacterium atrosepticum (strain SCRI 1043 / ATCC BAA-672) (Erwinia carotovora subsp. atroseptica) protein is 4-diphosphocytidyl-2-C-methyl-D-erythritol kinase.